Here is a 276-residue protein sequence, read N- to C-terminus: UDP-3-O-acyl-N-acetylglucosamine deacetylase (276 aa).

The Zn(2+) site is built by His76, His234, and Asp238. His261 (proton donor) is an active-site residue.

It belongs to the LpxC family. The cofactor is Zn(2+).

It catalyses the reaction a UDP-3-O-[(3R)-3-hydroxyacyl]-N-acetyl-alpha-D-glucosamine + H2O = a UDP-3-O-[(3R)-3-hydroxyacyl]-alpha-D-glucosamine + acetate. The protein operates within glycolipid biosynthesis; lipid IV(A) biosynthesis; lipid IV(A) from (3R)-3-hydroxytetradecanoyl-[acyl-carrier-protein] and UDP-N-acetyl-alpha-D-glucosamine: step 2/6. Functionally, catalyzes the hydrolysis of UDP-3-O-myristoyl-N-acetylglucosamine to form UDP-3-O-myristoylglucosamine and acetate, the committed step in lipid A biosynthesis. The polypeptide is UDP-3-O-acyl-N-acetylglucosamine deacetylase (Synechocystis sp. (strain ATCC 27184 / PCC 6803 / Kazusa)).